A 171-amino-acid polypeptide reads, in one-letter code: Lipoprotein signal peptidase (171 aa).

A run of 4 helical transmembrane segments spans residues 12–32 (LAWLWLSLLVLVIDQATKLYF), 42–62 (IVVIPDYFSWTLAYNTGAAFS), 70–90 (WQRWLFALIAVVVSAVLVVWL), and 96–116 (NETWLAVALALVLGGAIGNLY). Catalysis depends on residues aspartate 126 and aspartate 145. Residues 137–157 (YFPAFNVADSAITVGAVMLAL) form a helical membrane-spanning segment.

The protein belongs to the peptidase A8 family.

Its subcellular location is the cell inner membrane. It carries out the reaction Release of signal peptides from bacterial membrane prolipoproteins. Hydrolyzes -Xaa-Yaa-Zaa-|-(S,diacylglyceryl)Cys-, in which Xaa is hydrophobic (preferably Leu), and Yaa (Ala or Ser) and Zaa (Gly or Ala) have small, neutral side chains.. The protein operates within protein modification; lipoprotein biosynthesis (signal peptide cleavage). In terms of biological role, this protein specifically catalyzes the removal of signal peptides from prolipoproteins. This chain is Lipoprotein signal peptidase, found in Pseudomonas putida (strain ATCC 47054 / DSM 6125 / CFBP 8728 / NCIMB 11950 / KT2440).